We begin with the raw amino-acid sequence, 342 residues long: tRNA-specific 2-thiouridylase MnmA (342 aa).

ATP is bound by residues 6 to 13 and Leu-32; that span reads LLSGGVDS. Catalysis depends on Cys-92, which acts as the Nucleophile. A disulfide bridge links Cys-92 with Cys-191. Gly-116 is a binding site for ATP. An interaction with tRNA region spans residues 138-140; the sequence is KDQ. Cys-191 serves as the catalytic Cysteine persulfide intermediate. Positions 293-294 are interaction with tRNA; that stretch reads RY.

This sequence belongs to the MnmA/TRMU family.

It localises to the cytoplasm. It carries out the reaction S-sulfanyl-L-cysteinyl-[protein] + uridine(34) in tRNA + AH2 + ATP = 2-thiouridine(34) in tRNA + L-cysteinyl-[protein] + A + AMP + diphosphate + H(+). Catalyzes the 2-thiolation of uridine at the wobble position (U34) of tRNA, leading to the formation of s(2)U34. The sequence is that of tRNA-specific 2-thiouridylase MnmA from Helicobacter pylori (strain HPAG1).